A 195-amino-acid chain; its full sequence is MGGTELDEMYFQSLSIAEVKLIRPRKFGDCRGYFSEVFREKWFRKNVADVGLVQDNESLSAQIGTVRGLHFQLEPFAQGKLVRCTRGALFDVAVDVRVGSPTYGKWVSAELSQENGAQLWVPAGFAHGFMTLKADTVISYKVTAPYSAEHDRGLKWDDPAIGINWPKMTTYVLSEKDSSQPSLCELPVSFQYVKV.

Substrate contacts are provided by residues R31, E36, 54 to 56, and R67; that span reads QDN. Catalysis depends on H70, which acts as the Proton acceptor. Residues K80 and H127 each contribute to the substrate site. Y140 serves as the catalytic Proton donor. Residues D151 and K176 each coordinate substrate.

This sequence belongs to the dTDP-4-dehydrorhamnose 3,5-epimerase family. Homodimer.

The enzyme catalyses dTDP-4-dehydro-6-deoxy-alpha-D-glucose = dTDP-4-dehydro-beta-L-rhamnose. It functions in the pathway carbohydrate biosynthesis; dTDP-L-rhamnose biosynthesis. In terms of biological role, catalyzes the epimerization of the C3' and C5'positions of dTDP-6-deoxy-D-xylo-4-hexulose, forming dTDP-6-deoxy-L-lyxo-4-hexulose. This chain is dTDP-4-dehydrorhamnose 3,5-epimerase, found in Sinorhizobium fredii (strain NBRC 101917 / NGR234).